A 422-amino-acid chain; its full sequence is UDP-N-acetylglucosamine 1-carboxyvinyltransferase (422 aa).

23-24 (KN) contacts phosphoenolpyruvate. Arg92 contacts UDP-N-acetyl-alpha-D-glucosamine. Cys116 functions as the Proton donor in the catalytic mechanism. At Cys116 the chain carries 2-(S-cysteinyl)pyruvic acid O-phosphothioketal. Residues 121 to 125 (RPVDL), 161 to 164 (KVSV), Asp306, and Ile328 contribute to the UDP-N-acetyl-alpha-D-glucosamine site.

It belongs to the EPSP synthase family. MurA subfamily.

It localises to the cytoplasm. It catalyses the reaction phosphoenolpyruvate + UDP-N-acetyl-alpha-D-glucosamine = UDP-N-acetyl-3-O-(1-carboxyvinyl)-alpha-D-glucosamine + phosphate. The protein operates within cell wall biogenesis; peptidoglycan biosynthesis. Its function is as follows. Cell wall formation. Adds enolpyruvyl to UDP-N-acetylglucosamine. This is UDP-N-acetylglucosamine 1-carboxyvinyltransferase from Aliivibrio salmonicida (strain LFI1238) (Vibrio salmonicida (strain LFI1238)).